Here is a 456-residue protein sequence, read N- to C-terminus: Methylenetetrahydrofolate--tRNA-(uracil-5-)-methyltransferase TrmFO (456 aa).

11–16 (GGGLAG) serves as a coordination point for FAD.

The protein belongs to the MnmG family. TrmFO subfamily. FAD serves as cofactor.

The protein localises to the cytoplasm. It carries out the reaction uridine(54) in tRNA + (6R)-5,10-methylene-5,6,7,8-tetrahydrofolate + NADH + H(+) = 5-methyluridine(54) in tRNA + (6S)-5,6,7,8-tetrahydrofolate + NAD(+). It catalyses the reaction uridine(54) in tRNA + (6R)-5,10-methylene-5,6,7,8-tetrahydrofolate + NADPH + H(+) = 5-methyluridine(54) in tRNA + (6S)-5,6,7,8-tetrahydrofolate + NADP(+). Functionally, catalyzes the folate-dependent formation of 5-methyl-uridine at position 54 (M-5-U54) in all tRNAs. This is Methylenetetrahydrofolate--tRNA-(uracil-5-)-methyltransferase TrmFO from Synechocystis sp. (strain ATCC 27184 / PCC 6803 / Kazusa).